The following is a 416-amino-acid chain: Probable intermembrane transport protein HI_1671 (416 aa).

8 consecutive transmembrane segments (helical) span residues 62-82, 107-127, 138-158, 172-192, 263-283, 306-326, 347-367, and 377-397; these read ILIL…LLGI, IFIC…MLWL, VLLF…LVAL, EINI…LLFI, LIAG…GIYL, FVAF…IFIM, LLHL…VLAL, and IINF…FCTM.

Belongs to the PqiA family.

It localises to the cell inner membrane. The protein is Probable intermembrane transport protein HI_1671 of Haemophilus influenzae (strain ATCC 51907 / DSM 11121 / KW20 / Rd).